The following is a 228-amino-acid chain: MAPKKKLQLPPPPPTDEEEYWDSQAEEVLDEEEEMMEDWDSLDEASEAEEVSDETPSPSVAFPSPAPQKLATVPSIATTSAPQAPPALPVRRPNRRWDTTGTRAAPTAPAAAAAAATAAVTQKQRRPDSKTLTKPKKSTAAAAAGGGALRLAPNEPVSTRELRNRIFPTLYAIFQQSRGQEQELKIKNRSLRSLTRSCLYHKSEDQLRRTLEDAEALFSKYCALTLKD.

A disordered region spans residues 1–156 (MAPKKKLQLP…GALRLAPNEP (156 aa)). Acidic residues predominate over residues 15–53 (TDEEEYWDSQAEEVLDEEEEMMEDWDSLDEASEAEEVSD). Composition is skewed to low complexity over residues 54–63 (ETPSPSVAFP) and 104–119 (AAPT…ATAA). The segment at 171 to 198 (YAIFQQSRGQEQELKIKNRSLRSLTRSC) is necessary for nuclear subcellular location. The segment at 177–197 (SRGQEQELKIKNRSLRSLTRS) is RS-repeat; required for splicing enhancer activity.

It belongs to the adenoviridae splicing factor family. As to quaternary structure, homooligomer. Interacts with DBP; this interaction occurs at a unique vertex during genome packaging. Interacts with IVa2; this interaction occurs at a unique vertex during genome packaging and seems to potentiate IVa2 and 33K oligomerization. In terms of processing, phosphorylated in vitro by human PKA and PRKDC. PRKDC inhibits, whereas PKA activates the splicing factor.

Its subcellular location is the host nucleus. In terms of biological role, promotes alternative splicing of late transcripts by promoting splicing at weak 3' splice sites. Required for the temporal activation of major late pre-mRNA splicing at late times of infection. Induces the splicing and expression of the late capsid vertex protein. Probably functions as the small terminase that is part of the molecular motor that translocates genomic DNA in empty capsid during DNA packaging. This motor is located at a unique vertex and comprises at least the IVa2 ATPase, the small terminase 33K and probably a portal. Forms a ring-like structure of about 17 nm in which genomic DNA is translocated into the capsid. Stimulates IVa2 ATPase activity in the presence of the viral genome. Once the DNA is packaged, the terminase detaches: the 33K protein is present in the empty particles, but not in the mature virions. Also involved in virion assembly. This chain is Protein 33K, found in Homo sapiens (Human).